Here is a 200-residue protein sequence, read N- to C-terminus: Lipopolysaccharide core heptose(II)-phosphate phosphatase (200 aa).

Positions 1-25 (MLAFCRSSLKSKKYFIILLALAAIA) are cleaved as a signal peptide.

This sequence belongs to the phosphoglycerate mutase family. Ais subfamily.

It is found in the periplasm. The protein operates within bacterial outer membrane biogenesis; lipopolysaccharide metabolism. Its function is as follows. Catalyzes the dephosphorylation of heptose(II) of the outer membrane lipopolysaccharide core. The protein is Lipopolysaccharide core heptose(II)-phosphate phosphatase of Escherichia coli (strain SE11).